Here is a 335-residue protein sequence, read N- to C-terminus: S-adenosylmethionine decarboxylase proenzyme (335 aa).

Catalysis depends on residues glutamate 12 and glutamate 15. Serine 70 serves as the catalytic Schiff-base intermediate with substrate; via pyruvic acid. Serine 70 is subject to Pyruvic acid (Ser); by autocatalysis. The Proton donor; for catalytic activity role is filled by cysteine 84. Active-site proton acceptor; for processing activity residues include serine 231 and histidine 245.

The protein belongs to the eukaryotic AdoMetDC family. Pyruvate serves as cofactor. Is synthesized initially as an inactive proenzyme. Formation of the active enzyme involves a self-maturation process in which the active site pyruvoyl group is generated from an internal serine residue via an autocatalytic post-translational modification. Two non-identical subunits are generated from the proenzyme in this reaction, and the pyruvate is formed at the N-terminus of the alpha chain, which is derived from the carboxyl end of the proenzyme. The post-translation cleavage follows an unusual pathway, termed non-hydrolytic serinolysis, in which the side chain hydroxyl group of the serine supplies its oxygen atom to form the C-terminus of the beta chain, while the remainder of the serine residue undergoes an oxidative deamination to produce ammonia and the pyruvoyl group blocking the N-terminus of the alpha chain.

The enzyme catalyses S-adenosyl-L-methionine + H(+) = S-adenosyl 3-(methylsulfanyl)propylamine + CO2. The protein operates within amine and polyamine biosynthesis; S-adenosylmethioninamine biosynthesis; S-adenosylmethioninamine from S-adenosyl-L-methionine: step 1/1. In terms of biological role, essential for biosynthesis of the polyamines spermidine and spermine. Promotes maintenance and self-renewal of embryonic stem cells, by maintaining spermine levels. The chain is S-adenosylmethionine decarboxylase proenzyme (amd1) from Xenopus laevis (African clawed frog).